The chain runs to 397 residues: Elongation factor Tu (397 aa).

One can recognise a tr-type G domain in the interval 10-206; sequence KPHVNIGTIG…AVDTYIPTPE (197 aa). Residues 19 to 26 are G1; sequence GHVDHGKT. 19 to 26 contacts GTP; the sequence is GHVDHGKT. Mg(2+) is bound at residue Thr26. The interval 60 to 64 is G2; the sequence is GITIN. Residues 81–84 are G3; sequence DCPG. Residues 81 to 85 and 136 to 139 contribute to the GTP site; these read DCPGH and NKSD. Positions 136 to 139 are G4; that stretch reads NKSD. The segment at 174–176 is G5; it reads SAL.

This sequence belongs to the TRAFAC class translation factor GTPase superfamily. Classic translation factor GTPase family. EF-Tu/EF-1A subfamily. In terms of assembly, monomer.

It is found in the cytoplasm. The enzyme catalyses GTP + H2O = GDP + phosphate + H(+). GTP hydrolase that promotes the GTP-dependent binding of aminoacyl-tRNA to the A-site of ribosomes during protein biosynthesis. This Clostridium kluyveri (strain ATCC 8527 / DSM 555 / NBRC 12016 / NCIMB 10680 / K1) protein is Elongation factor Tu.